A 397-amino-acid polypeptide reads, in one-letter code: Ribosomal RNA large subunit methyltransferase I (397 aa).

Residues 2-81 enclose the PUA domain; the sequence is STTVYLQKDR…EQIDTEFFVR (80 aa).

It belongs to the methyltransferase superfamily. RlmI family.

It localises to the cytoplasm. It catalyses the reaction cytidine(1962) in 23S rRNA + S-adenosyl-L-methionine = 5-methylcytidine(1962) in 23S rRNA + S-adenosyl-L-homocysteine + H(+). Its function is as follows. Specifically methylates the cytosine at position 1962 (m5C1962) of 23S rRNA. This Tolumonas auensis (strain DSM 9187 / NBRC 110442 / TA 4) protein is Ribosomal RNA large subunit methyltransferase I.